The primary structure comprises 463 residues: Cysteine--tRNA ligase (463 aa).

C30 lines the Zn(2+) pocket. The 'HIGH' region motif lies at 32 to 42 (MTVYDYCHVGH). C214, H239, and E243 together coordinate Zn(2+). Residues 271–275 (KMSKS) carry the 'KMSKS' region motif. An ATP-binding site is contributed by K274.

It belongs to the class-I aminoacyl-tRNA synthetase family. In terms of assembly, monomer. Requires Zn(2+) as cofactor.

The protein localises to the cytoplasm. It catalyses the reaction tRNA(Cys) + L-cysteine + ATP = L-cysteinyl-tRNA(Cys) + AMP + diphosphate. This is Cysteine--tRNA ligase from Ralstonia pickettii (strain 12J).